Consider the following 358-residue polypeptide: Peptide chain release factor 2 (358 aa).

Q242 carries the N5-methylglutamine modification.

Belongs to the prokaryotic/mitochondrial release factor family. Post-translationally, methylated by PrmC. Methylation increases the termination efficiency of RF2.

It localises to the cytoplasm. Functionally, peptide chain release factor 2 directs the termination of translation in response to the peptide chain termination codons UGA and UAA. In Borreliella burgdorferi (strain ATCC 35210 / DSM 4680 / CIP 102532 / B31) (Borrelia burgdorferi), this protein is Peptide chain release factor 2 (prfB).